A 118-amino-acid chain; its full sequence is uncharacterized protein (118 aa).

An N-terminal signal peptide occupies residues 1 to 22; sequence MKMSYLRSGIVGFLAGASLSYA. Residues 41-71 adopt a coiled-coil conformation; sequence TATEALETDKQLYKKIEKKIEELESSCVKKS.

This is an uncharacterized protein from Schizosaccharomyces pombe (strain 972 / ATCC 24843) (Fission yeast).